The primary structure comprises 798 residues: Elongation factor G, mitochondrial (798 aa).

Residues 1-24 (MRVIRAAAALNSSCAASSRQGARY) constitute a mitochondrion transit peptide. The region spanning 97–383 (SMVRNIGIAA…AVCDYLPNPG (287 aa)) is the tr-type G domain. GTP contacts are provided by residues 106–113 (AHIDSGKT), 181–185 (DTPGH), and 235–238 (NKMD).

It belongs to the TRAFAC class translation factor GTPase superfamily. Classic translation factor GTPase family. EF-G/EF-2 subfamily.

It is found in the mitochondrion. It participates in protein biosynthesis; polypeptide chain elongation. Functionally, mitochondrial GTPase that catalyzes the GTP-dependent ribosomal translocation step during translation elongation. During this step, the ribosome changes from the pre-translocational (PRE) to the post-translocational (POST) state as the newly formed A-site-bound peptidyl-tRNA and P-site-bound deacylated tRNA move to the P and E sites, respectively. Catalyzes the coordinated movement of the two tRNA molecules, the mRNA and conformational changes in the ribosome. This Chaetomium globosum (strain ATCC 6205 / CBS 148.51 / DSM 1962 / NBRC 6347 / NRRL 1970) (Soil fungus) protein is Elongation factor G, mitochondrial.